The following is a 309-amino-acid chain: Succinate dehydrogenase [ubiquinone] iron-sulfur subunit 3, mitochondrial (309 aa).

A mitochondrion-targeting transit peptide spans 1-22 (MSSVLRLLGRRICNPAAEKVRL). In terms of domain architecture, 2Fe-2S ferredoxin-type spans 69–160 (FKIYRWNPDK…PTIITPLPHM (92 aa)). Residues Cys-120, Cys-125, and Cys-140 each coordinate [2Fe-2S] cluster. A 4Fe-4S ferredoxin-type domain is found at 202-232 (DRKKLDGLYECILCACCTTSCPSYWWNPEEF). Residues Cys-212, Cys-215, and Cys-218 each coordinate [4Fe-4S] cluster. Cys-222 contacts [3Fe-4S] cluster. Trp-227 is an a ubiquinone binding site. Residues Cys-270 and Cys-276 each coordinate [3Fe-4S] cluster. Residue Cys-280 participates in [4Fe-4S] cluster binding.

The protein belongs to the succinate dehydrogenase/fumarate reductase iron-sulfur protein family. In terms of assembly, component of complex II composed of eight subunits in plants: four classical SDH subunits SDH1, SDH2, SDH3 and SDH4 (a flavoprotein (FP), an iron-sulfur protein (IP), and a cytochrome b composed of a large and a small subunit.), as well as four subunits unknown in mitochondria from bacteria and heterotrophic eukaryotes. Requires [2Fe-2S] cluster as cofactor. It depends on [3Fe-4S] cluster as a cofactor. The cofactor is [4Fe-4S] cluster.

The protein resides in the mitochondrion inner membrane. The catalysed reaction is a quinone + succinate = fumarate + a quinol. The protein operates within carbohydrate metabolism; tricarboxylic acid cycle; fumarate from succinate (eukaryal route): step 1/1. Functionally, iron-sulfur protein (IP) subunit of succinate dehydrogenase (SDH) that is involved in complex II of the mitochondrial electron transport chain and is responsible for transferring electrons from succinate to ubiquinone (coenzyme Q). This chain is Succinate dehydrogenase [ubiquinone] iron-sulfur subunit 3, mitochondrial (SDH2-3), found in Arabidopsis thaliana (Mouse-ear cress).